A 773-amino-acid chain; its full sequence is Acyl-homoserine lactone acylase PvdQ (773 aa).

Residues 1 to 23 (MSRALPGFLFAGLSVAVVLPAQA) form the signal peptide. Positions 200–221 (SQQVQALQLAAARNERFALERG) are cleaved as a propeptide — spacer peptide. Residue Ser-222 is the Nucleophile of the active site.

This sequence belongs to the peptidase S45 family. In terms of assembly, heterodimer of an alpha subunit and a beta subunit processed from the same precursor.

It localises to the periplasm. It catalyses the reaction an N-acyl-L-homoserine lactone + H2O = L-homoserine lactone + a carboxylate. Functionally, catalyzes the deacylation of acyl-homoserine lactone (AHL or acyl-HSL), releasing homoserine lactone (HSL) and the corresponding fatty acid. Possesses a specificity for the degradation of long-chain acyl-HSLs (side chains of 11 to 14 carbons in length). This chain is Acyl-homoserine lactone acylase PvdQ (pvdQ), found in Pseudomonas syringae pv. tomato (strain ATCC BAA-871 / DC3000).